Reading from the N-terminus, the 201-residue chain is Glutathione peroxidase 1 (201 aa).

Phosphoserine is present on serine 32. Selenocysteine 47 is a catalytic residue. A non-standard amino acid (selenocysteine) is located at residue selenocysteine 47. An N6-acetyllysine; alternate mark is found at lysine 86, lysine 112, and lysine 146. N6-succinyllysine; alternate is present on residues lysine 86, lysine 112, and lysine 146. Phosphoserine is present on residues serine 195 and serine 199.

The protein belongs to the glutathione peroxidase family. As to quaternary structure, homotetramer. Interacts with MIEN1. Post-translationally, during periods of oxidative stress, Sec-47 may react with a superoxide radical, irreversibly lose hydroselenide and be converted to dehydroalanine.

It localises to the cytoplasm. The protein localises to the mitochondrion. It carries out the reaction 2 glutathione + H2O2 = glutathione disulfide + 2 H2O. The enzyme catalyses a hydroperoxy polyunsaturated fatty acid + 2 glutathione = a hydroxy polyunsaturated fatty acid + glutathione disulfide + H2O. The catalysed reaction is tert-butyl hydroperoxide + 2 glutathione = tert-butanol + glutathione disulfide + H2O. It catalyses the reaction cumene hydroperoxide + 2 glutathione = 2-phenylpropan-2-ol + glutathione disulfide + H2O. It carries out the reaction (13S)-hydroperoxy-(9Z,11E)-octadecadienoate + 2 glutathione = (13S)-hydroxy-(9Z,11E)-octadecadienoate + glutathione disulfide + H2O. The enzyme catalyses (9S)-hydroperoxy-(10E,12Z)-octadecadienoate + 2 glutathione = (9S)-hydroxy-(10E,12Z)-octadecadienoate + glutathione disulfide + H2O. The catalysed reaction is (5S)-hydroperoxy-(6E,8Z,11Z,14Z)-eicosatetraenoate + 2 glutathione = (5S)-hydroxy-(6E,8Z,11Z,14Z)-eicosatetraenoate + glutathione disulfide + H2O. It catalyses the reaction (12S)-hydroperoxy-(5Z,8Z,10E,14Z)-eicosatetraenoate + 2 glutathione = (12S)-hydroxy-(5Z,8Z,10E,14Z)-eicosatetraenoate + glutathione disulfide + H2O. It carries out the reaction (12R)-hydroperoxy-(5Z,8Z,10E,14Z)-eicosatetraenoate + 2 glutathione = (12R)-hydroxy-(5Z,8Z,10E,14Z)-eicosatetraenoate + glutathione disulfide + H2O. The enzyme catalyses (15S)-hydroperoxy-(5Z,8Z,11Z,13E)-eicosatetraenoate + 2 glutathione = (15S)-hydroxy-(5Z,8Z,11Z,13E)-eicosatetraenoate + glutathione disulfide + H2O. The catalysed reaction is (5S)-hydroperoxy-(6E,8Z,11Z,14Z,17Z)-eicosapentaenoate + 2 glutathione = (5S)-hydroxy-(6E,8Z,11Z,14Z,17Z)-eicosapentaenoate + glutathione disulfide + H2O. It catalyses the reaction (12S)-hydroperoxy-(5Z,8Z,10E,14Z,17Z)-eicosapentaenoate + 2 glutathione = (12S)-hydroxy-(5Z,8Z,10E,14Z,17Z)-eicosapentaenoate + glutathione disulfide + H2O. It carries out the reaction (15S)-hydroperoxy-(5Z,8Z,11Z,13E,17Z)-eicosapentaenoate + 2 glutathione = (15S)-hydroxy-(5Z,8Z,11Z,13E,17Z)-eicosapentaenoate + glutathione disulfide + H2O. The enzyme catalyses (15S)-hydroperoxy-(11Z,13E)-eicosadienoate + 2 glutathione = (15S)-hydroxy-(11Z,13E)-eicosadienoate + glutathione disulfide + H2O. The catalysed reaction is (17S)-hydroperoxy-(4Z,7Z,10Z,13Z,15E,19Z)-docosahexaenoate + 2 glutathione = (17S)-hydroxy-(4Z,7Z,10Z,13Z,15E,19Z)-docosahexaenoate + glutathione disulfide + H2O. Its function is as follows. Catalyzes the reduction of hydroperoxides in a glutathione-dependent manner thus regulating cellular redox homeostasis. Can reduce small soluble hydroperoxides such as H2O2, cumene hydroperoxide and tert-butyl hydroperoxide, as well as several fatty acid-derived hydroperoxides. In platelets catalyzes the reduction of 12-hydroperoxyeicosatetraenoic acid, the primary product of the arachidonate 12-lipoxygenase pathway. This is Glutathione peroxidase 1 (GPX1) from Macaca fuscata fuscata (Japanese macaque).